The sequence spans 132 residues: Interleukin-13 (132 aa).

The first 18 residues, 1–18 (MALLLTTVIALTCLGGFA), serve as a signal peptide directing secretion. Residues Asn38, Asn49, Asn57, and Asn72 are each glycosylated (N-linked (GlcNAc...) asparagine). 2 cysteine pairs are disulfide-bonded: Cys48/Cys76 and Cys64/Cys90.

This sequence belongs to the IL-4/IL-13 family. Interacts with IL13RA2.

Its subcellular location is the secreted. In terms of biological role, cytokine that plays important roles in allergic inflammation and immune response to parasite infection. Synergizes with IL2 in regulating interferon-gamma synthesis. Stimulates B-cell proliferation, and activation of eosinophils, basophils, and mast cells. Plays an important role in controlling IL33 activity by modulating the production of transmembrane and soluble forms of interleukin-1 receptor-like 1/IL1RL1. Displays the capacity to antagonize Th1-driven proinflammatory immune response and downregulates synthesis of many proinflammatory cytokines including IL1, IL6, IL10, IL12 and TNF-alpha through a mechanism that partially involves suppression of NF-kappa-B. Also functions on nonhematopoietic cells, including endothelial cells where it induces vascular cell adhesion protein 1/VCAM1, which is important in the recruitment of eosinophils. Exerts its biological effects through its receptors which comprises the IL4R chain and the IL13RA1 chain, to activate JAK1 and TYK2, leading to the activation of STAT6. Aside from IL13RA1, another receptor IL13RA2 acts as a high affinity decoy for IL13 and mediates internalization and depletion of extracellular IL13. The chain is Interleukin-13 (IL13) from Pan troglodytes (Chimpanzee).